A 255-amino-acid chain; its full sequence is MLRKRVEIGPVESGLWNAVETDGAAHLTLIDPASQDPERAVQMARSAADAGTTALMVGGSVGATGSALDRTVRAIKDSVDLPVILFPSSAAGLCDNADAVFFMSLLNSRSTSYLIENQALGAPIVSRYGIEAIPMGYIVVEPGGTVGWVGDAKLVPRRKPDIAAAYALAGRYLGMRLIYLEAGSGAESPVPTSMVSAVRDAIGDTLLVVGGGIRDAEAARKLVSAGADLIVTGTGVEESGDVFRFVKDIVTAIHV.

Mg(2+)-binding residues include Asp31 and Ser60. Residues 179-185 (YLEAGSG), 211-212 (GG), and 233-234 (GT) each bind sn-glycerol 1-phosphate.

This sequence belongs to the GGGP/HepGP synthase family. Group II subfamily. Mg(2+) is required as a cofactor.

It is found in the cytoplasm. The enzyme catalyses sn-glycerol 1-phosphate + (2E,6E,10E)-geranylgeranyl diphosphate = sn-3-O-(geranylgeranyl)glycerol 1-phosphate + diphosphate. It functions in the pathway membrane lipid metabolism; glycerophospholipid metabolism. Functionally, prenyltransferase that catalyzes the transfer of the geranylgeranyl moiety of geranylgeranyl diphosphate (GGPP) to the C3 hydroxyl of sn-glycerol-1-phosphate (G1P). This reaction is the first ether-bond-formation step in the biosynthesis of archaeal membrane lipids. In Methanothrix thermoacetophila (strain DSM 6194 / JCM 14653 / NBRC 101360 / PT) (Methanosaeta thermophila), this protein is Geranylgeranylglyceryl phosphate synthase.